Consider the following 1082-residue polypeptide: CRISPR-associated endonuclease Cas9 (1082 aa).

Residue Asp16 is the For RuvC-like nuclease domain of the active site. Residues Asp16, Glu504, and Glu508 each coordinate Mg(2+). In terms of domain architecture, HNH Cas9-type spans 512–667; that stretch reads SFKDRKEIEK…DEDGFKERNL (156 aa). The active-site Proton acceptor for HNH nuclease domain is the His588. His723 contacts Mg(2+).

This sequence belongs to the CRISPR-associated protein Cas9 family. Subtype II-C subfamily. In terms of assembly, monomer. Binds crRNA and tracrRNA. It depends on Mg(2+) as a cofactor.

CRISPR (clustered regularly interspaced short palindromic repeat) is an adaptive immune system that provides protection against mobile genetic elements (viruses, transposable elements and conjugative plasmids). CRISPR clusters contain spacers, sequences complementary to antecedent mobile elements, and target invading nucleic acids. CRISPR clusters are transcribed and processed into CRISPR RNA (crRNA). In type II CRISPR systems correct processing of pre-crRNA requires a trans-encoded small RNA (tracrRNA), endogenous ribonuclease 3 (rnc) and this protein. The tracrRNA serves as a guide for ribonuclease 3-aided processing of pre-crRNA. Subsequently Cas9/crRNA/tracrRNA endonucleolytically cleaves linear or circular dsDNA target complementary to the spacer; Cas9 is inactive in the absence of the 2 guide RNAs (gRNA). Cas9 recognizes the protospacer adjacent motif (PAM) in the CRISPR repeat sequences to help distinguish self versus nonself, as targets within the bacterial CRISPR locus do not have PAMs. PAM recognition is also required for catalytic activity. Cuts target DNA in Cas9:gRNAs mixing experiments with C.jejuni strain NCTC 11168 and P.multocoda strain Pm70. The protein is CRISPR-associated endonuclease Cas9 of Neisseria meningitidis serogroup A / serotype 4A (strain DSM 15465 / Z2491).